The sequence spans 555 residues: Dihydroxy-acid dehydratase (555 aa).

Cys-46 is a binding site for [2Fe-2S] cluster. A Mg(2+)-binding site is contributed by Asp-78. A [2Fe-2S] cluster-binding site is contributed by Cys-119. Mg(2+) contacts are provided by Asp-120 and Lys-121. An N6-carboxylysine modification is found at Lys-121. Cys-191 contributes to the [2Fe-2S] cluster binding site. Glu-442 serves as a coordination point for Mg(2+). The Proton acceptor role is filled by Ser-468.

It belongs to the IlvD/Edd family. Homodimer. Requires [2Fe-2S] cluster as cofactor. The cofactor is Mg(2+).

The catalysed reaction is (2R)-2,3-dihydroxy-3-methylbutanoate = 3-methyl-2-oxobutanoate + H2O. It carries out the reaction (2R,3R)-2,3-dihydroxy-3-methylpentanoate = (S)-3-methyl-2-oxopentanoate + H2O. It functions in the pathway amino-acid biosynthesis; L-isoleucine biosynthesis; L-isoleucine from 2-oxobutanoate: step 3/4. Its pathway is amino-acid biosynthesis; L-valine biosynthesis; L-valine from pyruvate: step 3/4. Functions in the biosynthesis of branched-chain amino acids. Catalyzes the dehydration of (2R,3R)-2,3-dihydroxy-3-methylpentanoate (2,3-dihydroxy-3-methylvalerate) into 2-oxo-3-methylpentanoate (2-oxo-3-methylvalerate) and of (2R)-2,3-dihydroxy-3-methylbutanoate (2,3-dihydroxyisovalerate) into 2-oxo-3-methylbutanoate (2-oxoisovalerate), the penultimate precursor to L-isoleucine and L-valine, respectively. This Thermus thermophilus (strain ATCC BAA-163 / DSM 7039 / HB27) protein is Dihydroxy-acid dehydratase.